We begin with the raw amino-acid sequence, 239 residues long: Ribosomal RNA small subunit methyltransferase G (239 aa).

Residues Gly-79, Phe-84, 130–131, and Arg-149 each bind S-adenosyl-L-methionine; that span reads AE. The segment covering 218 to 227 has biased composition (basic residues); sequence KHKKTPKKYP. The segment at 218–239 is disordered; that stretch reads KHKKTPKKYPRQAGTPNKKPIA.

It belongs to the methyltransferase superfamily. RNA methyltransferase RsmG family.

It localises to the cytoplasm. In terms of biological role, specifically methylates the N7 position of a guanine in 16S rRNA. The sequence is that of Ribosomal RNA small subunit methyltransferase G from Leuconostoc citreum (strain KM20).